The following is a 272-amino-acid chain: Bifunctional protein FolD 2 (272 aa).

Residues Gly157–Ser159, Thr182, and Ile223 each bind NADP(+).

Belongs to the tetrahydrofolate dehydrogenase/cyclohydrolase family. Homodimer.

It carries out the reaction (6R)-5,10-methylene-5,6,7,8-tetrahydrofolate + NADP(+) = (6R)-5,10-methenyltetrahydrofolate + NADPH. The enzyme catalyses (6R)-5,10-methenyltetrahydrofolate + H2O = (6R)-10-formyltetrahydrofolate + H(+). It functions in the pathway one-carbon metabolism; tetrahydrofolate interconversion. Catalyzes the oxidation of 5,10-methylenetetrahydrofolate to 5,10-methenyltetrahydrofolate and then the hydrolysis of 5,10-methenyltetrahydrofolate to 10-formyltetrahydrofolate. This is Bifunctional protein FolD 2 from Syntrophomonas wolfei subsp. wolfei (strain DSM 2245B / Goettingen).